The chain runs to 206 residues: Ribonuclease HII (206 aa).

An RNase H type-2 domain is found at 18–206 (LRIAGVDEVG…PVHNILYQEK (189 aa)). A divalent metal cation-binding residues include Asp24, Glu25, and Asp115.

The protein belongs to the RNase HII family. Mn(2+) is required as a cofactor. The cofactor is Mg(2+).

The protein localises to the cytoplasm. It catalyses the reaction Endonucleolytic cleavage to 5'-phosphomonoester.. Functionally, endonuclease that specifically degrades the RNA of RNA-DNA hybrids. This is Ribonuclease HII from Dinoroseobacter shibae (strain DSM 16493 / NCIMB 14021 / DFL 12).